Here is a 521-residue protein sequence, read N- to C-terminus: Protein nucleotidyltransferase YdiU (521 aa).

The ATP site is built by Gly-109, Gly-111, Arg-112, Lys-131, Asp-143, Gly-144, Arg-194, and Arg-201. Asp-270 serves as the catalytic Proton acceptor. Mg(2+) is bound by residues Asn-271 and Asp-280. Asp-280 contributes to the ATP binding site.

Belongs to the SELO family. Mg(2+) serves as cofactor. It depends on Mn(2+) as a cofactor.

It catalyses the reaction L-seryl-[protein] + ATP = 3-O-(5'-adenylyl)-L-seryl-[protein] + diphosphate. The catalysed reaction is L-threonyl-[protein] + ATP = 3-O-(5'-adenylyl)-L-threonyl-[protein] + diphosphate. It carries out the reaction L-tyrosyl-[protein] + ATP = O-(5'-adenylyl)-L-tyrosyl-[protein] + diphosphate. The enzyme catalyses L-histidyl-[protein] + UTP = N(tele)-(5'-uridylyl)-L-histidyl-[protein] + diphosphate. It catalyses the reaction L-seryl-[protein] + UTP = O-(5'-uridylyl)-L-seryl-[protein] + diphosphate. The catalysed reaction is L-tyrosyl-[protein] + UTP = O-(5'-uridylyl)-L-tyrosyl-[protein] + diphosphate. In terms of biological role, nucleotidyltransferase involved in the post-translational modification of proteins. It can catalyze the addition of adenosine monophosphate (AMP) or uridine monophosphate (UMP) to a protein, resulting in modifications known as AMPylation and UMPylation. This Burkholderia mallei (strain ATCC 23344) protein is Protein nucleotidyltransferase YdiU.